The following is a 168-amino-acid chain: NADH-ubiquinone oxidoreductase chain 6 (168 aa).

Helical transmembrane passes span 1–21 (MKMMTIYIISLLLMIGFVAFA), 27–47 (IYGGLSLVVSGGLGCGMVVSL), 50–70 (VFLGLVVFLVYLGGMLVVFGY), 87–107 (VVAFIMLLFVLLLQVGWYFMS), and 143–163 (WALALLGWILFMTIYVVLEVV).

Belongs to the complex I subunit 6 family. In terms of assembly, core subunit of respiratory chain NADH dehydrogenase (Complex I) which is composed of 45 different subunits.

It localises to the mitochondrion inner membrane. The enzyme catalyses a ubiquinone + NADH + 5 H(+)(in) = a ubiquinol + NAD(+) + 4 H(+)(out). In terms of biological role, core subunit of the mitochondrial membrane respiratory chain NADH dehydrogenase (Complex I) which catalyzes electron transfer from NADH through the respiratory chain, using ubiquinone as an electron acceptor. Essential for the catalytic activity and assembly of complex I. The polypeptide is NADH-ubiquinone oxidoreductase chain 6 (MT-ND6) (Didelphis virginiana (North American opossum)).